The following is a 76-amino-acid chain: Omega/kappa-hexatoxin-Ar1g (76 aa).

Residues 1-22 (MNTATGFIVLLVLATVLGGIEA) form the signal peptide. A propeptide spanning residues 23–35 (GESHMRKDAMGRV) is cleaved from the precursor. Disulfide bonds link Cys-40–Cys-55, Cys-47–Cys-60, and Cys-54–Cys-74.

Belongs to the neurotoxin 08 (Shiva) family. 02 (omega/kappa toxin) subfamily. Expressed by the venom gland.

The protein localises to the secreted. Functionally, toxin that may inhibit ion channels. This is Omega/kappa-hexatoxin-Ar1g from Atrax robustus (Sydney funnel-web spider).